Consider the following 279-residue polypeptide: Large ribosomal subunit protein uL2 (279 aa).

2 disordered regions span residues 1 to 43 (MGIK…TAGR) and 207 to 279 (KAGR…PGKH). Polar residues predominate over residues 8–22 (PTTNGRRNMTASDFS). Residues 23-33 (EITKTKPEKSL) show a composition bias toward basic and acidic residues. Residues 34 to 43 (LDSQSHTAGR) show a composition bias toward polar residues. 2 stretches are compositionally biased toward basic residues: residues 209-219 (GRTRWQGKRPT) and 254-279 (TLGKKTRNKKARSNKLIVRGRRPGKH).

Belongs to the universal ribosomal protein uL2 family. In terms of assembly, part of the 50S ribosomal subunit. Forms a bridge to the 30S subunit in the 70S ribosome.

In terms of biological role, one of the primary rRNA binding proteins. Required for association of the 30S and 50S subunits to form the 70S ribosome, for tRNA binding and peptide bond formation. It has been suggested to have peptidyltransferase activity; this is somewhat controversial. Makes several contacts with the 16S rRNA in the 70S ribosome. The polypeptide is Large ribosomal subunit protein uL2 (Lactiplantibacillus plantarum (strain ATCC BAA-793 / NCIMB 8826 / WCFS1) (Lactobacillus plantarum)).